Reading from the N-terminus, the 472-residue chain is Velvet complex subunit umv2 (472 aa).

Basic and acidic residues-rich tracts occupy residues 1-10 (MSRSDTDGRD), 29-59 (SQRRERPDYGYAVEETHRPHTAQERFPDSHG), 67-80 (YSRDSDRFSYHRGD), and 89-105 (SYQRELELMKARGEQER). 3 disordered regions span residues 1-121 (MSRS…PLEA), 281-327 (CDDG…QFGG), and 433-472 (SQGIKIPVRNDKKKQRRRNDEGGDGMGDYDGASGGDEDDE). Residues 106–116 (SYGGASASRSS) show a composition bias toward low complexity. In terms of domain architecture, Velvet spans 158–441 (ENGRRYRLVV…ASQGIKIPVR (284 aa)). Residues 286–298 (RSSTHPQHASEST) show a composition bias toward polar residues. The span at 456-466 (DGMGDYDGASG) shows a compositional bias: gly residues.

Belongs to the velvet family. VelB subfamily. As to quaternary structure, component of the heterotrimeric velvet complex composed of laeA, veA and velB; VeA acting as a bridging protein between laeA and velB. Forms a heterodimeric complex with vosA; the formation of the velB-vosA complex is light-dependent.

It localises to the nucleus. The protein resides in the cytoplasm. Component of the velvet transcription factor complex that controls sexual/asexual developmental ratio in response to light, promoting sexual development in the darkness while stimulating asexual sporulation under illumination. The velvet complex acts as a global regulator for secondary metabolite gene expression. Component of the velB-VosA heterodimeric complex that plays a dual role in activating genes associated with spore maturation and repressing certain development-associated genes. The velB-VosA complex binds DNA through the DNA-binding domain of vosA that recognizes an 11-nucleotide consensus sequence 5'-CTGGCCGCGGC-3' consisting of two motifs in the promoters of key developmental regulatory genes. Required for full virulence on seedlings. The sequence is that of Velvet complex subunit umv2 from Mycosarcoma maydis (Corn smut fungus).